Reading from the N-terminus, the 98-residue chain is NADH-ubiquinone oxidoreductase chain 4L (98 aa).

3 consecutive transmembrane segments (helical) span residues 2–22, 26–46, and 61–81; these read SPIY…TLLF, LMST…MVTS, and ITML…LVMI.

The protein belongs to the complex I subunit 4L family. Core subunit of respiratory chain NADH dehydrogenase (Complex I) which is composed of 45 different subunits.

The protein localises to the mitochondrion inner membrane. The catalysed reaction is a ubiquinone + NADH + 5 H(+)(in) = a ubiquinol + NAD(+) + 4 H(+)(out). Core subunit of the mitochondrial membrane respiratory chain NADH dehydrogenase (Complex I) which catalyzes electron transfer from NADH through the respiratory chain, using ubiquinone as an electron acceptor. Part of the enzyme membrane arm which is embedded in the lipid bilayer and involved in proton translocation. This chain is NADH-ubiquinone oxidoreductase chain 4L (MT-ND4L), found in Nephelomys albigularis (Tomes's rice rat).